The chain runs to 229 residues: tRNA (guanosine(18)-2'-O)-methyltransferase (229 aa).

S-adenosyl-L-methionine contacts are provided by threonine 96, isoleucine 139, and leucine 148.

This sequence belongs to the class IV-like SAM-binding methyltransferase superfamily. RNA methyltransferase TrmH family.

It carries out the reaction guanosine(18) in tRNA + S-adenosyl-L-methionine = 2'-O-methylguanosine(18) in tRNA + S-adenosyl-L-homocysteine + H(+). Functionally, catalyzes the 2'-O methylation of guanosine at position 18 in tRNA. In Escherichia coli O157:H7, this protein is tRNA (guanosine(18)-2'-O)-methyltransferase.